The sequence spans 709 residues: MSKMRVYEYAKKQNVPSKDVIHKLKEMNIEVNNHMAMLEADVVEKLDHQYRPNTGKKEEKKAEKKTEKPKRPTPAKAADFADEEIFDDSKEAAKMKPAKKKGAPKGKETKKTEAQQQEKKLLQAAKKKGKGPAKGKKQAAPAAKQAPQPAKKEKELPKKITFEGSLTVAELAKKLGREPSEIIKKLFMLGVMATINQDLDKDAIELICSDYGVEVEEKVTIDETNFEAIEIVDAPEDLVERPPVVTIMGHVDHGKTTLLDAIRHSKVTEQEAGGITQHIGAYQVTVNDKKITFLDTPGHEAFTTMRARGAQVTDIVILVVAADDGVMPQTVEAINHAKAANVPIIVAINKIDKPEANPDRVMQELMEYNLVPEEWGGDTIFCKLSAKTKEGLDHLLEMILLVSEMEELKANPNRRAVGTVIEAKLDKGRGPVATLLIQAGTLRVGDPIVVGTTYGRVRAMVNDSGRRVKEATPSMPVEITGLHEVPQAGDRFMVFEDEKKARQIAEARAQRQLQEQRSVKTRVSLDDLFEQIKQGEMKELNLIVKADVQGSVEALVAALQKIDVEGVRVKIIHAAVGAITESDISLATASNAIVIGFNVRPDANAKRAAESEKVDIRLHRIIYNVIEEIEAAMKGMLDPEYEEKVIGQAEVRQTFKVSKVGTIAGCYVTDGKITRDSKVRLIRQGIVVYEGEIDSLKRYKAIAPNGARV.

2 stretches are compositionally biased toward basic and acidic residues: residues 47-70 and 105-121; these read DHQYRPNTGKKEEKKAEKKTEKPK and KGKETKKTEAQQQEKKL. Positions 47–157 are disordered; it reads DHQYRPNTGK…QPAKKEKELP (111 aa). Residues 125–137 are compositionally biased toward basic residues; that stretch reads AKKKGKGPAKGKK. Residues 138–149 show a composition bias toward low complexity; it reads QAAPAAKQAPQP. Residues 240–409 form the tr-type G domain; it reads ERPPVVTIMG…LLVSEMEELK (170 aa). Residues 249 to 256 form a G1 region; sequence GHVDHGKT. 249 to 256 is a binding site for GTP; it reads GHVDHGKT. A G2 region spans residues 274 to 278; that stretch reads GITQH. Residues 295-298 are G3; sequence DTPG. GTP-binding positions include 295–299 and 349–352; these read DTPGH and NKID. The tract at residues 349 to 352 is G4; the sequence is NKID. Positions 385–387 are G5; that stretch reads SAK.

Belongs to the TRAFAC class translation factor GTPase superfamily. Classic translation factor GTPase family. IF-2 subfamily.

It is found in the cytoplasm. Its function is as follows. One of the essential components for the initiation of protein synthesis. Protects formylmethionyl-tRNA from spontaneous hydrolysis and promotes its binding to the 30S ribosomal subunits. Also involved in the hydrolysis of GTP during the formation of the 70S ribosomal complex. This is Translation initiation factor IF-2 from Geobacillus kaustophilus (strain HTA426).